The following is a 67-amino-acid chain: Large ribosomal subunit protein bL32 (67 aa).

Positions 1–19 are enriched in basic residues; it reads MAVPKRKMSRSNTRARRSQ. Residues 1-21 are disordered; the sequence is MAVPKRKMSRSNTRARRSQWK.

It belongs to the bacterial ribosomal protein bL32 family.

This chain is Large ribosomal subunit protein bL32, found in Arthrobacter sp. (strain FB24).